A 344-amino-acid chain; its full sequence is Inositol 2-dehydrogenase/D-chiro-inositol 3-dehydrogenase (344 aa).

Belongs to the Gfo/Idh/MocA family. In terms of assembly, homotetramer.

The enzyme catalyses myo-inositol + NAD(+) = scyllo-inosose + NADH + H(+). It carries out the reaction 1D-chiro-inositol + NAD(+) = scyllo-inosine + NADH + H(+). It participates in polyol metabolism; myo-inositol degradation into acetyl-CoA; acetyl-CoA from myo-inositol: step 1/7. Functionally, involved in the oxidation of myo-inositol (MI) and D-chiro-inositol (DCI) to 2-keto-myo-inositol (2KMI or 2-inosose) and 1-keto-D-chiro-inositol (1KDCI), respectively. The chain is Inositol 2-dehydrogenase/D-chiro-inositol 3-dehydrogenase from Bacillus licheniformis (strain ATCC 14580 / DSM 13 / JCM 2505 / CCUG 7422 / NBRC 12200 / NCIMB 9375 / NCTC 10341 / NRRL NRS-1264 / Gibson 46).